The following is a 380-amino-acid chain: Putative 12-oxophytodienoate reductase 4 (380 aa).

FMN is bound by residues 36 to 38 (PLT), A69, and Q111. 183-186 (HGAH) is a substrate binding site. The Proton donor role is filled by Y188. Residue R235 coordinates FMN. Residue R276 participates in substrate binding. FMN contacts are provided by residues G306 and 327 to 328 (GR).

The protein belongs to the NADH:flavin oxidoreductase/NADH oxidase family. Requires FMN as cofactor.

Functionally, putative oxophytodienoate reductase that may be involved in the biosynthesis or metabolism of oxylipin signaling molecules. This chain is Putative 12-oxophytodienoate reductase 4 (OPR4), found in Oryza sativa subsp. japonica (Rice).